A 383-amino-acid polypeptide reads, in one-letter code: MKNKLPPFIEIYRALIATPSISATEEALDQSNADLITLLADWFKDLGFNVEVQPVPGTRNKFNMLASCGQGAGGLLLAGHTDTVPFDDGRWTRDPFTLTEHDGKLYGLGTADMKGFFAFILDALRDVDVTKLKKPLYILATADEETSMAGARYFAETTALRPDCAIIGEPTSLQPVRAHKGHISNAIRIQGQSGHSSDPARGVNAIELMHDAIGHILQLRDNLKERYHYEAFTVPYPTLNLGHIHGGDASNRICACCELHMDIRPLPGMTLNELNGLLNDALAPVSERWPGRLTVDELHPPIPGYECPPNHQLVEVVEKLLGAKTEVVNYCTEAPFIQTLCPTLVLGPGSINQAHQPDEYLETRFIKPTRELITQVIHHFCWH.

H80 provides a ligand contact to Zn(2+). D82 is an active-site residue. D112 provides a ligand contact to Zn(2+). The active site involves E144. 3 residues coordinate Zn(2+): E145, E169, and H355.

It belongs to the peptidase M20A family. ArgE subfamily. Homodimer. Requires Zn(2+) as cofactor. The cofactor is Co(2+). It depends on glutathione as a cofactor.

Its subcellular location is the cytoplasm. The enzyme catalyses N(2)-acetyl-L-ornithine + H2O = L-ornithine + acetate. It participates in amino-acid biosynthesis; L-arginine biosynthesis; L-ornithine from N(2)-acetyl-L-ornithine (linear): step 1/1. Functionally, catalyzes the hydrolysis of the amide bond of N(2)-acetylated L-amino acids. Cleaves the acetyl group from N-acetyl-L-ornithine to form L-ornithine, an intermediate in L-arginine biosynthesis pathway, and a branchpoint in the synthesis of polyamines. The sequence is that of Acetylornithine deacetylase from Escherichia coli O8 (strain IAI1).